The sequence spans 553 residues: Arginine--tRNA ligase (553 aa).

The 'HIGH' region motif lies at 132-140; it reads PTGDLHIGH.

This sequence belongs to the class-I aminoacyl-tRNA synthetase family. In terms of assembly, monomer.

The protein localises to the cytoplasm. It carries out the reaction tRNA(Arg) + L-arginine + ATP = L-arginyl-tRNA(Arg) + AMP + diphosphate. The sequence is that of Arginine--tRNA ligase from Staphylococcus aureus (strain N315).